The chain runs to 327 residues: Thiamine-binding periplasmic protein (327 aa).

Residues 1-18 (MLKKCLPLLLLCTAPVFA) form the signal peptide. Thiamine is bound by residues 59–60 (DG), 161–162 (ST), Trp-197, and 215–218 (YTTS).

This sequence belongs to the bacterial solute-binding protein 1 family. As to quaternary structure, monomer in solution. The complex is composed of two ATP-binding proteins (ThiQ), two transmembrane proteins (ThiP) and a solute-binding protein (ThiB).

Its subcellular location is the periplasm. Its activity is regulated as follows. Transport is inhibited by the sulfhydryl-specific modifier N-ethylmaleimide. Functionally, part of the ABC transporter complex ThiBPQ involved in thiamine import. Binds thiamine, thiamine phosphate and thiamine diphosphate with high affinity. This Escherichia coli (strain K12) protein is Thiamine-binding periplasmic protein (thiB).